A 342-amino-acid polypeptide reads, in one-letter code: Vancomycin B-type resistance protein VanB (342 aa).

Residues K132, 168-170 (FVK), 176-177 (SS), 206-213 (EQAISGCE), and F240 contribute to the ATP site. The ATP-grasp domain occupies 136 to 337 (YILTKNAGIA…LPALIDSLIT (202 aa)). H243 serves as a coordination point for substrate. 303–304 (NE) serves as a coordination point for ATP. Positions 304 and 306 each coordinate Mg(2+).

This sequence belongs to the D-alanine--D-alanine ligase family. It depends on Mg(2+) as a cofactor. Mn(2+) serves as cofactor.

It is found in the cell membrane. The catalysed reaction is (R)-lactate + D-alanine + ATP = D-alanyl-(R)-lactate + ADP + phosphate. Its function is as follows. Required for high-level resistance to glycopeptides antibiotics. D-Ala--D-Ala ligase of altered specificity which catalyzes ester bond formation between D-Ala and various D-hydroxy acids; producing a peptidoglycan which does not terminate in D-alanine but in D-lactate, thus preventing vancomycin binding. This is Vancomycin B-type resistance protein VanB (vanB) from Enterococcus faecalis (strain ATCC 700802 / V583).